A 616-amino-acid polypeptide reads, in one-letter code: Proline--tRNA ligase (616 aa).

It belongs to the class-II aminoacyl-tRNA synthetase family. ProS type 1 subfamily. As to quaternary structure, homodimer.

It localises to the cytoplasm. It catalyses the reaction tRNA(Pro) + L-proline + ATP = L-prolyl-tRNA(Pro) + AMP + diphosphate. Catalyzes the attachment of proline to tRNA(Pro) in a two-step reaction: proline is first activated by ATP to form Pro-AMP and then transferred to the acceptor end of tRNA(Pro). As ProRS can inadvertently accommodate and process non-cognate amino acids such as alanine and cysteine, to avoid such errors it has two additional distinct editing activities against alanine. One activity is designated as 'pretransfer' editing and involves the tRNA(Pro)-independent hydrolysis of activated Ala-AMP. The other activity is designated 'posttransfer' editing and involves deacylation of mischarged Ala-tRNA(Pro). The misacylated Cys-tRNA(Pro) is not edited by ProRS. The chain is Proline--tRNA ligase from Streptococcus sanguinis (strain SK36).